Consider the following 232-residue polypeptide: Protein Mis18-alpha (232 aa).

Residues Ser-36, Ser-39, and Ser-40 each carry the phosphoserine modification. In terms of domain architecture, Mis18 spans 79–177 (PLVFLCSGCR…SVEAIESYVL (99 aa)). Residues Cys-84, Cys-87, Cys-140, and Cys-143 each contribute to the Zn(2+) site. Lys-161 is covalently cross-linked (Glycyl lysine isopeptide (Lys-Gly) (interchain with G-Cter in SUMO2)). Residue Ser-232 is modified to Phosphoserine.

This sequence belongs to the mis18 family. In terms of assembly, homodimer, and heterodimer with OIP5/MIS18B. Identified in a complex containing MIS18A, OIP5/MIS18B, MIS18BP1, RBBP7 and RBBP4.

It is found in the nucleus. The protein resides in the chromosome. The protein localises to the centromere. In terms of biological role, required for recruitment of CENPA to centromeres and normal chromosome segregation during mitosis. The protein is Protein Mis18-alpha (MIS18A) of Pan troglodytes (Chimpanzee).